The chain runs to 486 residues: Betaine aldehyde dehydrogenase (486 aa).

Residues Thr-23 and Asp-90 each contribute to the K(+) site. Residue 147–149 participates in NAD(+) binding; that stretch reads GAW. The Charge relay system role is filled by Lys-159. NAD(+) is bound by residues 173–176 and 226–229; these read KPSE and ESGT. Leu-241 is a binding site for K(+). The Proton acceptor role is filled by Glu-247. NAD(+) is bound by residues Gly-249, Cys-281, and Glu-382. The active-site Nucleophile is Cys-281. Cys-281 is modified (cysteine sulfenic acid (-SOH)). K(+)-binding residues include Lys-452 and Gly-455. Catalysis depends on Glu-459, which acts as the Charge relay system.

This sequence belongs to the aldehyde dehydrogenase family. In terms of assembly, dimer of dimers. K(+) serves as cofactor.

It carries out the reaction betaine aldehyde + NAD(+) + H2O = glycine betaine + NADH + 2 H(+). It participates in amine and polyamine biosynthesis; betaine biosynthesis via choline pathway; betaine from betaine aldehyde: step 1/1. Involved in the biosynthesis of the osmoprotectant glycine betaine. Catalyzes the irreversible oxidation of betaine aldehyde to the corresponding acid. The polypeptide is Betaine aldehyde dehydrogenase (Vibrio vulnificus (strain CMCP6)).